A 220-amino-acid chain; its full sequence is Thiamine-phosphate synthase (220 aa).

4-amino-2-methyl-5-(diphosphooxymethyl)pyrimidine contacts are provided by residues 39-43 and N80; that span reads QLRDK. Residues D81 and D100 each contribute to the Mg(2+) site. Residue S119 participates in 4-amino-2-methyl-5-(diphosphooxymethyl)pyrimidine binding. A 2-[(2R,5Z)-2-carboxy-4-methylthiazol-5(2H)-ylidene]ethyl phosphate-binding site is contributed by 145-147; sequence TPT. K148 serves as a coordination point for 4-amino-2-methyl-5-(diphosphooxymethyl)pyrimidine. G176 provides a ligand contact to 2-[(2R,5Z)-2-carboxy-4-methylthiazol-5(2H)-ylidene]ethyl phosphate.

It belongs to the thiamine-phosphate synthase family. Mg(2+) serves as cofactor.

It carries out the reaction 2-[(2R,5Z)-2-carboxy-4-methylthiazol-5(2H)-ylidene]ethyl phosphate + 4-amino-2-methyl-5-(diphosphooxymethyl)pyrimidine + 2 H(+) = thiamine phosphate + CO2 + diphosphate. It catalyses the reaction 2-(2-carboxy-4-methylthiazol-5-yl)ethyl phosphate + 4-amino-2-methyl-5-(diphosphooxymethyl)pyrimidine + 2 H(+) = thiamine phosphate + CO2 + diphosphate. The enzyme catalyses 4-methyl-5-(2-phosphooxyethyl)-thiazole + 4-amino-2-methyl-5-(diphosphooxymethyl)pyrimidine + H(+) = thiamine phosphate + diphosphate. Its pathway is cofactor biosynthesis; thiamine diphosphate biosynthesis; thiamine phosphate from 4-amino-2-methyl-5-diphosphomethylpyrimidine and 4-methyl-5-(2-phosphoethyl)-thiazole: step 1/1. In terms of biological role, condenses 4-methyl-5-(beta-hydroxyethyl)thiazole monophosphate (THZ-P) and 2-methyl-4-amino-5-hydroxymethyl pyrimidine pyrophosphate (HMP-PP) to form thiamine monophosphate (TMP). This chain is Thiamine-phosphate synthase, found in Mycobacterium ulcerans (strain Agy99).